Reading from the N-terminus, the 155-residue chain is MAEANLDPVFQIQRVYLKDLSLEQPNSPEILLNQEQPGVEIQLGVDAKPVAEGLFEITVTATVHTKIEEKTVFMVEAKQAGIFEIRNIQSDQMGALLGIACPQIVYPYLRSNVADIIQRGGFPPVHMAEINFQAMYEQQQAEAMMATSEAPQILV.

The protein belongs to the SecB family. As to quaternary structure, homotetramer, a dimer of dimers. One homotetramer interacts with 1 SecA dimer.

It is found in the cytoplasm. Functionally, one of the proteins required for the normal export of preproteins out of the cell cytoplasm. It is a molecular chaperone that binds to a subset of precursor proteins, maintaining them in a translocation-competent state. It also specifically binds to its receptor SecA. The chain is Protein-export protein SecB 1 from Polaromonas naphthalenivorans (strain CJ2).